Consider the following 367-residue polypeptide: Histidinol-phosphate aminotransferase (367 aa).

At Lys-230 the chain carries N6-(pyridoxal phosphate)lysine.

It belongs to the class-II pyridoxal-phosphate-dependent aminotransferase family. Histidinol-phosphate aminotransferase subfamily. In terms of assembly, homodimer. Pyridoxal 5'-phosphate serves as cofactor.

The enzyme catalyses L-histidinol phosphate + 2-oxoglutarate = 3-(imidazol-4-yl)-2-oxopropyl phosphate + L-glutamate. Its pathway is amino-acid biosynthesis; L-histidine biosynthesis; L-histidine from 5-phospho-alpha-D-ribose 1-diphosphate: step 7/9. The protein is Histidinol-phosphate aminotransferase of Thermobifida fusca (strain YX).